A 120-amino-acid chain; its full sequence is Large ribosomal subunit protein uL18 (120 aa).

The protein belongs to the universal ribosomal protein uL18 family. Part of the 50S ribosomal subunit; part of the 5S rRNA/L5/L18/L25 subcomplex. Contacts the 5S and 23S rRNAs.

This is one of the proteins that bind and probably mediate the attachment of the 5S RNA into the large ribosomal subunit, where it forms part of the central protuberance. This Xanthobacter autotrophicus (strain ATCC BAA-1158 / Py2) protein is Large ribosomal subunit protein uL18.